Here is a 74-residue protein sequence, read N- to C-terminus: Cytochrome c oxidase assembly factor 5 (74 aa).

In terms of domain architecture, CHCH spans 27–65 (ESDCVVQEGKSPRQCLKEGYCNSLKYAFFECKRSVLDNR). Positions 30–41 (CVVQEGKSPRQC) match the Cx10C motif motif. 2 disulfides stabilise this stretch: C30/C57 and C41/C47. S37 bears the Phosphoserine mark. The Cx9C motif signature appears at 47-57 (CNSLKYAFFEC).

It belongs to the PET191 family.

In terms of biological role, involved in an early step of the mitochondrial complex IV assembly process. In Pongo abelii (Sumatran orangutan), this protein is Cytochrome c oxidase assembly factor 5 (Coa5).